The sequence spans 301 residues: MPGRFTVALVIALGGTCGVADALPLGQTDDPMIVAHRAGTRDFPENTVLAITNAVAAGVDGMWLTVQVSSDGVPVLYRPSDLATLTDGAGPVNSKTVQQLQQLNAGWNFTTPGVEGHPYRQRATPIPTLEQAIGATPPDMTLFLDLKQTPPQPLVSAVAQVLTRTGAAGRSIVYSTNADITAAASRQEGLQVAESRDVTRQRLFNMALNHHCDPQPDPGKWAGFELHRDVTVTEEFTLGSGISAVNAELWDEASVDCFRSQSGMKVMGFAVKTVDDYRLAHKIGLDAVLVDSPLAAQQWRH.

A signal peptide spans 1–22 (MPGRFTVALVIALGGTCGVADA). The GP-PDE domain occupies 31–300 (PMIVAHRAGT…DSPLAAQQWR (270 aa)).

This is an uncharacterized protein from Mycobacterium tuberculosis (strain ATCC 25618 / H37Rv).